A 68-amino-acid chain; its full sequence is Bacteriocin lactococcin-B (68 aa).

A propeptide spanning residues 1–21 (MKNQLNFNIVSDEELAEVNGG) is cleaved from the precursor.

The protein localises to the secreted. Functionally, kills Lactococci by dissipating the membrane potential of the cells. This chain is Bacteriocin lactococcin-B (lcnB), found in Lactococcus lactis subsp. cremoris (Streptococcus cremoris).